A 148-amino-acid polypeptide reads, in one-letter code: uncharacterized protein (148 aa).

Residues Val65–Asp79 show a composition bias toward low complexity. Residues Val65–Gly85 form a disordered region.

This is an uncharacterized protein from Saccharomyces cerevisiae (strain ATCC 204508 / S288c) (Baker's yeast).